A 144-amino-acid polypeptide reads, in one-letter code: Large ribosomal subunit protein uL15 (144 aa).

Basic and acidic residues predominate over residues 1–18 (MRLNDLHPAEGSRPEGKR). The disordered stretch occupies residues 1–58 (MRLNDLHPAEGSRPEGKRVGRGIGSGLGKTGGRGHKGQKSRSGGSVKPGFEGGQMPLQ). Residues 21–31 (RGIGSGLGKTG) show a composition bias toward gly residues.

This sequence belongs to the universal ribosomal protein uL15 family. As to quaternary structure, part of the 50S ribosomal subunit.

Functionally, binds to the 23S rRNA. The protein is Large ribosomal subunit protein uL15 of Alcanivorax borkumensis (strain ATCC 700651 / DSM 11573 / NCIMB 13689 / SK2).